Consider the following 84-residue polypeptide: Small ribosomal subunit protein uS17 (84 aa).

This sequence belongs to the universal ribosomal protein uS17 family. As to quaternary structure, part of the 30S ribosomal subunit.

Functionally, one of the primary rRNA binding proteins, it binds specifically to the 5'-end of 16S ribosomal RNA. In Vibrio parahaemolyticus serotype O3:K6 (strain RIMD 2210633), this protein is Small ribosomal subunit protein uS17.